A 1451-amino-acid polypeptide reads, in one-letter code: Copper-transporting ATPase 2 (1451 aa).

At 1-646 (MPEQERKVTA…KTEIKQWKKS (646 aa)) the chain is on the cytoplasmic side. 3 consecutive HMA domains span residues 57–123 (TTGV…FEAS), 142–208 (AVVK…FEAA), and 256–322 (ATLP…PGYF). Residues cysteine 68, cysteine 71, cysteine 153, cysteine 156, cysteine 267, and cysteine 270 each contribute to the Cu(+) site. The segment at 328-353 (DGLEKESGSSSVPSLGSSQRQQEPGP) is disordered. The span at 335 to 345 (GSSSVPSLGSS) shows a compositional bias: low complexity. The region spanning 355–421 (RTAVLTITGI…AVEDMGFEVS (67 aa)) is the HMA 4 domain. Phosphoserine is present on residues serine 469, serine 471, and serine 474. 2 HMA domains span residues 481–547 (QKCF…FEAA) and 557–623 (GDIE…FHAS). Cu(+)-binding residues include cysteine 492, cysteine 495, cysteine 568, and cysteine 571. A helical membrane pass occupies residues 647–668 (FLCSLVFGIPVMGLMIYMLIPS). Over 669-690 (SKPHETMVLDHNIIPGLSVLNL) the chain is Extracellular. The chain crosses the membrane as a helical span at residues 691–710 (IFFILCTFVQFLGGWYFYVQ). Over 711-717 (AYKSLRH) the chain is Cytoplasmic. A helical membrane pass occupies residues 718-738 (KSANMDVLIVLATTIAYAYSL). At 739 to 757 (VILVVAIAEKAEKSPVTFF) the chain is on the extracellular side. Residues 758 to 778 (DTPPMLFVFIALGRWLEHVAK) form a helical membrane-spanning segment. The Cytoplasmic segment spans residues 779-912 (SKTSEALAKL…KAPIQQLADR (134 aa)). A helical membrane pass occupies residues 913–935 (FSGYFVPFIIIISTLTLVVWIII). At 936-965 (GFVDFGIVQKYFPSPSKHISQTEVIIRFAF) the chain is on the extracellular side. Residues 966–987 (QTSITVLCIACPCSLGLATPTA) traverse the membrane as a helical segment. Residues 988-1310 (VMVGTGVAAQ…LSKRTVRRIR (323 aa)) lie on the Cytoplasmic side of the membrane. Aspartate 1020 functions as the 4-aspartylphosphate intermediate in the catalytic mechanism. Residues aspartate 1255 and aspartate 1259 each contribute to the Mg(2+) site. A helical membrane pass occupies residues 1311–1328 (VNLVLALIYNMVGIPIAA). The Extracellular segment spans residues 1329–1339 (GVFMPIGIVLQ). The helical transmembrane segment at 1340–1357 (PWMGSAAASSVSVVLSSL) threads the bilayer. At 1358–1451 (QLKCYRKPDL…LSDRDEEQCI (94 aa)) the chain is on the cytoplasmic side. Phosphoserine occurs at positions 1384 and 1443.

This sequence belongs to the cation transport ATPase (P-type) (TC 3.A.3) family. Type IB subfamily. Monomer. Interacts with COMMD1/MURR1. Interacts with DCTN4, in a copper-dependent manner. Interacts with ATOX1. Interacts (via C-terminus) with ZBTB16/PLZF. Expressed in brain, liver, kidney, spleen and stomach. In brain, detected in neuronal cells of the hippocampal formation, olfactory bulbs, cerebellum, cerebral cortex and nuclei in the brainstem. Isoform PINA is expressed during night in adult pineal gland (pinealocytes) and retina. Isoform PINA is not detected in other tissue.

It is found in the golgi apparatus. The protein resides in the trans-Golgi network membrane. Its subcellular location is the late endosome. It carries out the reaction Cu(+)(in) + ATP + H2O = Cu(+)(out) + ADP + phosphate + H(+). In terms of biological role, copper ion transmembrane transporter involved in the export of copper out of the cells, such as the efflux of hepatic copper into the bile. This Rattus norvegicus (Rat) protein is Copper-transporting ATPase 2 (Atp7b).